The following is a 299-amino-acid chain: 33 kDa chaperonin (299 aa).

2 disulfides stabilise this stretch: C234-C236 and C268-C271.

It belongs to the HSP33 family. In terms of processing, under oxidizing conditions two disulfide bonds are formed involving the reactive cysteines. Under reducing conditions zinc is bound to the reactive cysteines and the protein is inactive.

It localises to the cytoplasm. In terms of biological role, redox regulated molecular chaperone. Protects both thermally unfolding and oxidatively damaged proteins from irreversible aggregation. Plays an important role in the bacterial defense system toward oxidative stress. This is 33 kDa chaperonin from Pseudomonas putida (strain GB-1).